A 201-amino-acid polypeptide reads, in one-letter code: Probable nicotinate-nucleotide adenylyltransferase (201 aa).

The tract at residues 182–201 (GPESSQSATSIRERGGWSLR) is disordered. Basic and acidic residues predominate over residues 192-201 (IRERGGWSLR).

It belongs to the NadD family.

The enzyme catalyses nicotinate beta-D-ribonucleotide + ATP + H(+) = deamido-NAD(+) + diphosphate. The protein operates within cofactor biosynthesis; NAD(+) biosynthesis; deamido-NAD(+) from nicotinate D-ribonucleotide: step 1/1. Functionally, catalyzes the reversible adenylation of nicotinate mononucleotide (NaMN) to nicotinic acid adenine dinucleotide (NaAD). This Parvibaculum lavamentivorans (strain DS-1 / DSM 13023 / NCIMB 13966) protein is Probable nicotinate-nucleotide adenylyltransferase.